The chain runs to 321 residues: Anthranilate phosphoribosyltransferase (321 aa).

Residues Gly-72, 75 to 76, Thr-80, 82 to 85, 99 to 107, and Ser-111 each bind 5-phospho-alpha-D-ribose 1-diphosphate; these read GD, NVST, and KHGNVSITS. Position 72 (Gly-72) interacts with anthranilate. Ser-84 serves as a coordination point for Mg(2+). Asn-102 contributes to the anthranilate binding site. Arg-157 is a binding site for anthranilate. 2 residues coordinate Mg(2+): Asp-216 and Glu-217.

Belongs to the anthranilate phosphoribosyltransferase family. Homodimer. It depends on Mg(2+) as a cofactor.

It carries out the reaction N-(5-phospho-beta-D-ribosyl)anthranilate + diphosphate = 5-phospho-alpha-D-ribose 1-diphosphate + anthranilate. The protein operates within amino-acid biosynthesis; L-tryptophan biosynthesis; L-tryptophan from chorismate: step 2/5. Catalyzes the transfer of the phosphoribosyl group of 5-phosphorylribose-1-pyrophosphate (PRPP) to anthranilate to yield N-(5'-phosphoribosyl)-anthranilate (PRA). This Methanococcus maripaludis (strain C5 / ATCC BAA-1333) protein is Anthranilate phosphoribosyltransferase.